A 197-amino-acid polypeptide reads, in one-letter code: Phosphoheptose isomerase (197 aa).

One can recognise an SIS domain in the interval 37 to 197 (MLQCLMNDGK…CIDSVLLEGM (161 aa)). A substrate-binding site is contributed by 52–54 (NGG). Zn(2+)-binding residues include H61 and E65. Substrate-binding positions include E65, 94 to 95 (ND), 120 to 122 (STS), S125, and Q175. Residues Q175 and H183 each coordinate Zn(2+).

Belongs to the SIS family. GmhA subfamily. As to quaternary structure, homotetramer. It depends on Zn(2+) as a cofactor.

Its subcellular location is the cytoplasm. It carries out the reaction 2 D-sedoheptulose 7-phosphate = D-glycero-alpha-D-manno-heptose 7-phosphate + D-glycero-beta-D-manno-heptose 7-phosphate. Its pathway is carbohydrate biosynthesis; D-glycero-D-manno-heptose 7-phosphate biosynthesis; D-glycero-alpha-D-manno-heptose 7-phosphate and D-glycero-beta-D-manno-heptose 7-phosphate from sedoheptulose 7-phosphate: step 1/1. It functions in the pathway bacterial outer membrane biogenesis; LOS core biosynthesis. Its function is as follows. Catalyzes the isomerization of sedoheptulose 7-phosphate in D-glycero-D-manno-heptose 7-phosphate. In Neisseria meningitidis serogroup A / serotype 4A (strain DSM 15465 / Z2491), this protein is Phosphoheptose isomerase.